We begin with the raw amino-acid sequence, 272 residues long: Shikimate dehydrogenase (NADP(+)) (272 aa).

Shikimate is bound by residues 20–22 (TMS) and Thr67. Lys71 (proton acceptor) is an active-site residue. Glu83 serves as a coordination point for NADP(+). Asn92 and Asp107 together coordinate shikimate. NADP(+) contacts are provided by residues 129–133 (GAGGA), 153–158 (NRTKSK), and Leu216. Shikimate is bound at residue Tyr218. Residue Gly239 participates in NADP(+) binding.

It belongs to the shikimate dehydrogenase family. As to quaternary structure, homodimer.

The catalysed reaction is shikimate + NADP(+) = 3-dehydroshikimate + NADPH + H(+). Its pathway is metabolic intermediate biosynthesis; chorismate biosynthesis; chorismate from D-erythrose 4-phosphate and phosphoenolpyruvate: step 4/7. Involved in the biosynthesis of the chorismate, which leads to the biosynthesis of aromatic amino acids. Catalyzes the reversible NADPH linked reduction of 3-dehydroshikimate (DHSA) to yield shikimate (SA). The chain is Shikimate dehydrogenase (NADP(+)) from Maridesulfovibrio salexigens (strain ATCC 14822 / DSM 2638 / NCIMB 8403 / VKM B-1763) (Desulfovibrio salexigens).